Reading from the N-terminus, the 489-residue chain is Tripartite motif-containing protein 10 (489 aa).

The segment at 16-61 adopts an RING-type zinc-finger fold; it reads CPVCQGTLREPVTIDCGHNFCRVCLTRYLEITSPDPEEPPTCPLCK. The B box-type zinc finger occupies 94–135; the sequence is DEEDVCPEHGEKVYFFCEDDEMQLCVVCREAWEHRAHTVRFL. Residues C99, H102, C121, and H127 each coordinate Zn(2+). The stretch at 142–245 forms a coiled coil; that stretch reads YREQIQKCLE…IEELEEKKER (104 aa). In terms of domain architecture, B30.2/SPRY spans 292–486; it reads REMKMFLEKL…FSLSSQEGAA (195 aa).

It belongs to the TRIM/RBCC family. As to quaternary structure, interacts with IFNAR1; this interaction prevents association of IFNAR1 with TYK2.

Its subcellular location is the cytoplasm. In terms of biological role, E3 ligase that plays an essential role in the differentiation and survival of terminal erythroid cells. May directly bind to PTEN and promote its ubiquitination, resulting in its proteasomal degradation and activation of hypertrophic signaling. In addition, plays a role in immune response regulation by repressing the phosphorylation of STAT1 and STAT2 in the interferon/JAK/STAT signaling pathway independent of its E3 ligase activity. Mechanistically, interacts with the intracellular domain of IFNAR1 and thereby inhibits the association between TYK2 and IFNAR1. In Bos taurus (Bovine), this protein is Tripartite motif-containing protein 10 (TRIM10).